Here is a 341-residue protein sequence, read N- to C-terminus: Ketol-acid reductoisomerase (NADP(+)) (341 aa).

A KARI N-terminal Rossmann domain is found at 2-181; it reads AKVYYNGDAN…GAARAGVLET (180 aa). NADP(+) is bound by residues 25–28, arginine 48, serine 52, and 82–85; these read YGSQ and DEKQ. Histidine 107 is a catalytic residue. Residue glycine 133 participates in NADP(+) binding. A KARI C-terminal knotted domain is found at 182 to 327; the sequence is TFKEETETDL…RELRSMMPFV (146 aa). Mg(2+) is bound by residues aspartate 190, glutamate 194, glutamate 226, and glutamate 230. Serine 251 lines the substrate pocket.

It belongs to the ketol-acid reductoisomerase family. It depends on Mg(2+) as a cofactor.

It carries out the reaction (2R)-2,3-dihydroxy-3-methylbutanoate + NADP(+) = (2S)-2-acetolactate + NADPH + H(+). The catalysed reaction is (2R,3R)-2,3-dihydroxy-3-methylpentanoate + NADP(+) = (S)-2-ethyl-2-hydroxy-3-oxobutanoate + NADPH + H(+). It participates in amino-acid biosynthesis; L-isoleucine biosynthesis; L-isoleucine from 2-oxobutanoate: step 2/4. The protein operates within amino-acid biosynthesis; L-valine biosynthesis; L-valine from pyruvate: step 2/4. Involved in the biosynthesis of branched-chain amino acids (BCAA). Catalyzes an alkyl-migration followed by a ketol-acid reduction of (S)-2-acetolactate (S2AL) to yield (R)-2,3-dihydroxy-isovalerate. In the isomerase reaction, S2AL is rearranged via a Mg-dependent methyl migration to produce 3-hydroxy-3-methyl-2-ketobutyrate (HMKB). In the reductase reaction, this 2-ketoacid undergoes a metal-dependent reduction by NADPH to yield (R)-2,3-dihydroxy-isovalerate. This chain is Ketol-acid reductoisomerase (NADP(+)), found in Geobacillus thermodenitrificans (strain NG80-2).